Consider the following 586-residue polypeptide: U-box domain-containing protein 73 (586 aa).

The disordered stretch occupies residues 21 to 122 (KADMSGLQRS…AAGADDGPTR (102 aa)). The span at 50 to 60 (RSAPTSPLRTP) shows a compositional bias: low complexity. A U-box domain is found at 182 to 258 (PIPIAHDGTL…SAWCLDHSDL (77 aa)).

The enzyme catalyses S-ubiquitinyl-[E2 ubiquitin-conjugating enzyme]-L-cysteine + [acceptor protein]-L-lysine = [E2 ubiquitin-conjugating enzyme]-L-cysteine + N(6)-ubiquitinyl-[acceptor protein]-L-lysine.. It functions in the pathway protein modification; protein ubiquitination. Possesses E3 ubiquitin-protein ligase in vitro. This Oryza sativa subsp. japonica (Rice) protein is U-box domain-containing protein 73 (PUB73).